The following is a 289-amino-acid chain: tRNA pseudouridine synthase A (289 aa).

Catalysis depends on Asp53, which acts as the Nucleophile. Tyr119 contacts substrate.

It belongs to the tRNA pseudouridine synthase TruA family. Homodimer.

It catalyses the reaction uridine(38/39/40) in tRNA = pseudouridine(38/39/40) in tRNA. Formation of pseudouridine at positions 38, 39 and 40 in the anticodon stem and loop of transfer RNAs. The sequence is that of tRNA pseudouridine synthase A from Corynebacterium glutamicum (strain ATCC 13032 / DSM 20300 / JCM 1318 / BCRC 11384 / CCUG 27702 / LMG 3730 / NBRC 12168 / NCIMB 10025 / NRRL B-2784 / 534).